The chain runs to 341 residues: tRNA N6-adenosine threonylcarbamoyltransferase (341 aa).

Residues histidine 117 and histidine 121 each contribute to the Fe cation site. Substrate-binding positions include 139–143 (VVSGG), aspartate 172, glycine 185, aspartate 189, and asparagine 278. Residue aspartate 307 participates in Fe cation binding.

It belongs to the KAE1 / TsaD family. Fe(2+) serves as cofactor.

Its subcellular location is the cytoplasm. It carries out the reaction L-threonylcarbamoyladenylate + adenosine(37) in tRNA = N(6)-L-threonylcarbamoyladenosine(37) in tRNA + AMP + H(+). Its function is as follows. Required for the formation of a threonylcarbamoyl group on adenosine at position 37 (t(6)A37) in tRNAs that read codons beginning with adenine. Is involved in the transfer of the threonylcarbamoyl moiety of threonylcarbamoyl-AMP (TC-AMP) to the N6 group of A37, together with TsaE and TsaB. TsaD likely plays a direct catalytic role in this reaction. The chain is tRNA N6-adenosine threonylcarbamoyltransferase from Bacillus licheniformis (strain ATCC 14580 / DSM 13 / JCM 2505 / CCUG 7422 / NBRC 12200 / NCIMB 9375 / NCTC 10341 / NRRL NRS-1264 / Gibson 46).